A 308-amino-acid polypeptide reads, in one-letter code: Aspartate carbamoyltransferase catalytic subunit (308 aa).

The carbamoyl phosphate site is built by arginine 58 and threonine 59. Lysine 86 is an L-aspartate binding site. The carbamoyl phosphate site is built by arginine 108, histidine 136, and glutamine 139. Residues arginine 169 and arginine 222 each contribute to the L-aspartate site. Glycine 264 and proline 265 together coordinate carbamoyl phosphate.

Belongs to the aspartate/ornithine carbamoyltransferase superfamily. ATCase family. In terms of assembly, heterododecamer (2C3:3R2) of six catalytic PyrB chains organized as two trimers (C3), and six regulatory PyrI chains organized as three dimers (R2).

The catalysed reaction is carbamoyl phosphate + L-aspartate = N-carbamoyl-L-aspartate + phosphate + H(+). The protein operates within pyrimidine metabolism; UMP biosynthesis via de novo pathway; (S)-dihydroorotate from bicarbonate: step 2/3. Catalyzes the condensation of carbamoyl phosphate and aspartate to form carbamoyl aspartate and inorganic phosphate, the committed step in the de novo pyrimidine nucleotide biosynthesis pathway. In Campylobacter hominis (strain ATCC BAA-381 / DSM 21671 / CCUG 45161 / LMG 19568 / NCTC 13146 / CH001A), this protein is Aspartate carbamoyltransferase catalytic subunit.